Reading from the N-terminus, the 210-residue chain is ATP phosphoribosyltransferase (210 aa).

It belongs to the ATP phosphoribosyltransferase family. Short subfamily. Heteromultimer composed of HisG and HisZ subunits.

Its subcellular location is the cytoplasm. The catalysed reaction is 1-(5-phospho-beta-D-ribosyl)-ATP + diphosphate = 5-phospho-alpha-D-ribose 1-diphosphate + ATP. It functions in the pathway amino-acid biosynthesis; L-histidine biosynthesis; L-histidine from 5-phospho-alpha-D-ribose 1-diphosphate: step 1/9. Catalyzes the condensation of ATP and 5-phosphoribose 1-diphosphate to form N'-(5'-phosphoribosyl)-ATP (PR-ATP). Has a crucial role in the pathway because the rate of histidine biosynthesis seems to be controlled primarily by regulation of HisG enzymatic activity. The chain is ATP phosphoribosyltransferase from Picosynechococcus sp. (strain ATCC 27264 / PCC 7002 / PR-6) (Agmenellum quadruplicatum).